We begin with the raw amino-acid sequence, 359 residues long: Peptide chain release factor 1 (359 aa).

At glutamine 235 the chain carries N5-methylglutamine. The disordered stretch occupies residues 283–309 (QKAESERSQARRSQVGSGDRSERIRTY).

The protein belongs to the prokaryotic/mitochondrial release factor family. Post-translationally, methylated by PrmC. Methylation increases the termination efficiency of RF1.

The protein resides in the cytoplasm. Peptide chain release factor 1 directs the termination of translation in response to the peptide chain termination codons UAG and UAA. The sequence is that of Peptide chain release factor 1 from Brucella melitensis biotype 2 (strain ATCC 23457).